The chain runs to 126 residues: Small ribosomal subunit protein uS13 (126 aa).

Positions 98-126 (PVRGQSTKNNARTRKGRKKTVANKKKATK) are disordered. Basic residues predominate over residues 108 to 126 (ARTRKGRKKTVANKKKATK).

This sequence belongs to the universal ribosomal protein uS13 family. Part of the 30S ribosomal subunit. Forms a loose heterodimer with protein S19. Forms two bridges to the 50S subunit in the 70S ribosome.

Functionally, located at the top of the head of the 30S subunit, it contacts several helices of the 16S rRNA. In the 70S ribosome it contacts the 23S rRNA (bridge B1a) and protein L5 of the 50S subunit (bridge B1b), connecting the 2 subunits; these bridges are implicated in subunit movement. Contacts the tRNAs in the A and P-sites. This chain is Small ribosomal subunit protein uS13, found in Phocaeicola vulgatus (strain ATCC 8482 / DSM 1447 / JCM 5826 / CCUG 4940 / NBRC 14291 / NCTC 11154) (Bacteroides vulgatus).